The following is a 920-amino-acid chain: Ubiquitin ligase-binding protein BUL2 (920 aa).

A compositionally biased stretch (polar residues) spans 1-10 (MTFTFSTSSR). Residues 1-89 (MTFTFSTSSR…EENSLEMDCT (89 aa)) are disordered. At Thr-22 the chain carries Phosphothreonine. A compositionally biased stretch (polar residues) spans 35–57 (QQLSSNSTDNSLHPNSGQTPRAS). Residues 73–82 (DRLRQEREEN) show a composition bias toward basic and acidic residues. The PY-motif motif lies at 129–133 (FPPSY). Position 557 is a phosphoserine (Ser-557).

This sequence belongs to the BUL1 family. In terms of assembly, component of the RSP5-BUL1/2 ubiquitin ligase complex composed of at least RSP5 and BUL1 or BUL2.

It localises to the cytoplasm. It participates in protein modification; protein ubiquitination. Functionally, component of a RSP5 ubiquitin ligase complex which specifies polyubiquitination and intracellular trafficking of the general amino acid permease GAP1 as well as other permeases such as PMA1. The RSP5-BUL1/2 complex is also necessary for the heat-shock element (HSE)-mediated gene expression, nitrogen starvation GLN3-dependent transcription and pressure-induced differential regulation of the 2 tryptophan permeases TAT1 and TAT2. The polypeptide is Ubiquitin ligase-binding protein BUL2 (BUL2) (Saccharomyces cerevisiae (strain ATCC 204508 / S288c) (Baker's yeast)).